A 304-amino-acid polypeptide reads, in one-letter code: 15-cis-phytoene synthase (304 aa).

This sequence belongs to the phytoene/squalene synthase family. The cofactor is ATP. Mn(2+) is required as a cofactor. Requires Mg(2+) as cofactor.

The enzyme catalyses 2 (2E,6E,10E)-geranylgeranyl diphosphate = 15-cis-phytoene + 2 diphosphate. It functions in the pathway carotenoid biosynthesis; astaxanthin biosynthesis. It participates in carotenoid biosynthesis; phytoene biosynthesis. Involved in the biosynthesis of carotenoids for the production of astaxanthin. Catalyzes the condensation of two molecules of geranylgeranyl diphosphate (GGPP) to give prephytoene diphosphate (PPPP) and the subsequent rearrangement of the cyclopropylcarbinyl intermediate to yield 15-cis phytoene. The chain is 15-cis-phytoene synthase (crtB) from Paracoccus sp. (strain N81106 / MBIC 01143) (Agrobacterium aurantiacum).